A 74-amino-acid chain; its full sequence is Progonadoliberin-3 (74 aa).

The signal sequence occupies residues 1 to 15 (VQVVVLALVAQVTLS). Glutamine 16 is subject to Pyrrolidone carboxylic acid. A Glycine amide modification is found at glycine 25.

The protein belongs to the GnRH family.

Its subcellular location is the secreted. Its function is as follows. Stimulates the secretion of gonadotropins. This Oncorhynchus mykiss (Rainbow trout) protein is Progonadoliberin-3 (gnrh3).